Here is a 163-residue protein sequence, read N- to C-terminus: Probable ribosome biogenesis protein RLP24 (163 aa).

The protein belongs to the eukaryotic ribosomal protein eL24 family. As to quaternary structure, associated with nucleolar and cytoplasmic pre-60S particles. At the end of biogenesis it dissociates from cytoplasmic pre-60S particles and is likely to be exchanged for its ribosomal homolog, RPL24.

It is found in the nucleus. Its subcellular location is the nucleolus. Functionally, involved in the biogenesis of the 60S ribosomal subunit. Ensures the docking of GTPBP4/NOG1 to pre-60S particles. This Pongo abelii (Sumatran orangutan) protein is Probable ribosome biogenesis protein RLP24 (RSL24D1).